We begin with the raw amino-acid sequence, 85 residues long: UPF0386 protein HNE_3437 (85 aa).

Belongs to the UPF0386 family.

The protein is UPF0386 protein HNE_3437 of Hyphomonas neptunium (strain ATCC 15444).